The chain runs to 347 residues: MESFVTLYVLPGLLILLKSVALIVILLVGVAYILYADRKIWAAVQLRRGPNVVGPWGLFQAFADLFKFVFKEPVIPSGANKGVFLLAPVVAAGLALAAWAVIPVSEGWAIANINVGILYVFAIASLEVYGVIMAGWASNSKYPFLGALRSAAQMVSYEVSIGFVIVTVLLAVGSLNLTDIVLSQRDGLGTMVGLPNSFLDWHWLALFPMFIIFFISALAETNRPPFDLVEAESELVAGHMIEYSSTPFLLFFLGEYVAIVLMCALTTILFLGGWLPPFDFAPFTWVPGVVWFVLKLVAVFFMFALVKSFVPRYRYDQLMRLGWKVFLPISLFMVVATAAFLKFTGLV.

Transmembrane regions (helical) follow at residues 13-33, 50-70, 82-102, 115-135, 161-181, 198-218, 248-268, 286-306, and 321-341; these read LLIL…VAYI, PNVV…KFVF, GVFL…WAVI, VGIL…IMAG, IGFV…TDIV, FLDW…ISAL, FLLF…LTTI, VPGV…FALV, and LGWK…AAFL.

Belongs to the complex I subunit 1 family. NDH-1 is composed of 14 different subunits. Subunits NuoA, H, J, K, L, M, N constitute the membrane sector of the complex.

The protein localises to the cell inner membrane. The enzyme catalyses a quinone + NADH + 5 H(+)(in) = a quinol + NAD(+) + 4 H(+)(out). Its function is as follows. NDH-1 shuttles electrons from NADH, via FMN and iron-sulfur (Fe-S) centers, to quinones in the respiratory chain. The immediate electron acceptor for the enzyme in this species is believed to be ubiquinone. Couples the redox reaction to proton translocation (for every two electrons transferred, four hydrogen ions are translocated across the cytoplasmic membrane), and thus conserves the redox energy in a proton gradient. This subunit may bind ubiquinone. This chain is NADH-quinone oxidoreductase subunit H, found in Chelativorans sp. (strain BNC1).